We begin with the raw amino-acid sequence, 519 residues long: Molybdate transporter 1 (519 aa).

Helical transmembrane passes span Leu-98–Ile-118, Leu-164–Leu-184, Ala-370–Cys-390, Ile-412–Leu-432, Phe-436–Val-456, Gly-464–Gly-484, and Phe-485–Ala-505.

It belongs to the SLC26A/SulP transporter (TC 2.A.53) family.

The protein localises to the membrane. With respect to regulation, 60% inhibition by 20 uM tungstate or by lack of glucose in the medium, but no inhibition by sulfate. High affinity molybdate transporter. Acts through an energy-dependent process. The sequence is that of Molybdate transporter 1 (MOT1) from Chlamydomonas reinhardtii (Chlamydomonas smithii).